A 478-amino-acid chain; its full sequence is Puromycin-sensitive aminopeptidase-like protein (478 aa).

Substrate is bound by residues E180 and 316–320 (GAMEN). H352 contacts Zn(2+). E353 (proton acceptor) is an active-site residue. Zn(2+)-binding residues include H356 and E375.

The protein belongs to the peptidase M1 family. The cofactor is Zn(2+).

Its function is as follows. Aminopeptidase with broad substrate specificity to several peptides. The protein is Puromycin-sensitive aminopeptidase-like protein (NPEPPSL1) of Homo sapiens (Human).